A 372-amino-acid polypeptide reads, in one-letter code: Maltose/maltodextrin import ATP-binding protein MalK (372 aa).

The region spanning 4–234 (VSLRNVGKSY…PANRFVAGFI (231 aa)) is the ABC transporter domain. 36–43 (GPSGCGKS) provides a ligand contact to ATP.

Belongs to the ABC transporter superfamily. Maltooligosaccharide importer (TC 3.A.1.1.1) family. The complex is composed of two ATP-binding proteins (MalK), two transmembrane proteins (MalG and MalK) and a solute-binding protein (MalE).

It is found in the cell inner membrane. The enzyme catalyses D-maltose(out) + ATP + H2O = D-maltose(in) + ADP + phosphate + H(+). Functionally, part of the ABC transporter complex MalEFGK involved in maltose/maltodextrin import. Responsible for energy coupling to the transport system. This chain is Maltose/maltodextrin import ATP-binding protein MalK, found in Mannheimia succiniciproducens (strain KCTC 0769BP / MBEL55E).